Here is a 433-residue protein sequence, read N- to C-terminus: MRMIDIIEKKRDGHTLTTEEINFFIDGYVKGDIPDYQASSLAMAIYFQDMNDDERAALTMAMVNSGDMIDLSDIKGVKVDKHSTGGVGDTTTLVLAPLVAAVDVPVAKMSGRGLGHTGGTIDKLEAIDGFHVEIDEATFVKLVNENKVAVVGQSGNLTPADKKLYALRDVTGTVNSIPLIASSIMSKKIAAGADAIVLDVKTGSGAFMKTLEDAEALAHAMVRIGNNVGRNTMAIISDMNQPLGRAIGNALELQEAIDTLKGQGPKDLTELVLTLGSQMVVLANKAETLEEARALLIEAINSGAALEKFKTFIKNQGGDETVIDHPERLPQAQYQIEYKAKKSGYVTELVSNDIGVASMMLGAGRLTKEDDIDLAVGIVLNKKIGDKVEEGESLLTIHSNRQDVDDVVKKLDSSITIADHVVSPTLIHKIIIE.

81 to 83 (KHS) serves as a coordination point for phosphate. K(+) contacts are provided by Gly88 and Thr90. Residues Thr92, 108 to 110 (KMS), and Thr120 each bind phosphate. Substrate is bound by residues Arg168 and Lys187. The K(+) site is built by Leu243, Ala246, and Glu255.

Belongs to the thymidine/pyrimidine-nucleoside phosphorylase family. Homodimer. K(+) is required as a cofactor.

The catalysed reaction is uridine + phosphate = alpha-D-ribose 1-phosphate + uracil. It catalyses the reaction thymidine + phosphate = 2-deoxy-alpha-D-ribose 1-phosphate + thymine. The enzyme catalyses 2'-deoxyuridine + phosphate = 2-deoxy-alpha-D-ribose 1-phosphate + uracil. Functionally, catalyzes phosphorolysis of the pyrimidine nucleosides uridine, thymidine and 2'-deoxyuridine with the formation of the corresponding pyrimidine base and ribose-1-phosphate. This is Pyrimidine-nucleoside phosphorylase (pdp) from Staphylococcus aureus (strain MSSA476).